Consider the following 321-residue polypeptide: Cytochrome f (321 aa).

The signal sequence occupies residues 1 to 37 (MKIYRQIKQSFSITKIVFSFFISLLLNLVAQPTICQA). Residues F38, C58, C61, and H62 each contribute to the heme site. The chain crosses the membrane as a helical span at residues 287–306 (VQGLIAFFISVVLAQIFLVL).

This sequence belongs to the cytochrome f family. The 4 large subunits of the cytochrome b6-f complex are cytochrome b6, subunit IV (17 kDa polypeptide, petD), cytochrome f and the Rieske protein, while the 4 small subunits are PetG, PetL, PetM and PetN. The complex functions as a dimer. Heme serves as cofactor.

The protein localises to the plastid. Its subcellular location is the cyanelle thylakoid membrane. In terms of biological role, component of the cytochrome b6-f complex, which mediates electron transfer between photosystem II (PSII) and photosystem I (PSI), cyclic electron flow around PSI, and state transitions. This is Cytochrome f (petA) from Cyanophora paradoxa.